Reading from the N-terminus, the 419-residue chain is UDP-N-acetylglucosamine 1-carboxyvinyltransferase (419 aa).

Residue 22–23 participates in phosphoenolpyruvate binding; sequence KN. Arg-91 provides a ligand contact to UDP-N-acetyl-alpha-D-glucosamine. Catalysis depends on Cys-115, which acts as the Proton donor. Cys-115 carries the 2-(S-cysteinyl)pyruvic acid O-phosphothioketal modification. Residues 120–124, 160–163, Asp-305, and Ile-327 contribute to the UDP-N-acetyl-alpha-D-glucosamine site; these read RPVDL and KVSV.

The protein belongs to the EPSP synthase family. MurA subfamily.

The protein resides in the cytoplasm. It catalyses the reaction phosphoenolpyruvate + UDP-N-acetyl-alpha-D-glucosamine = UDP-N-acetyl-3-O-(1-carboxyvinyl)-alpha-D-glucosamine + phosphate. It participates in cell wall biogenesis; peptidoglycan biosynthesis. Its function is as follows. Cell wall formation. Adds enolpyruvyl to UDP-N-acetylglucosamine. This chain is UDP-N-acetylglucosamine 1-carboxyvinyltransferase, found in Sodalis glossinidius (strain morsitans).